Here is a 922-residue protein sequence, read N- to C-terminus: Coronin-7 (922 aa).

WD repeat units lie at residues 75 to 115 (CHSD…EALP), 124 to 163 (PEEL…PLTE), 166 to 205 (AHKD…QASQ), and 209 to 253 (AHEN…SALA). A disordered region spans residues 419–467 (DTDLSEGFSSPSSLMSPSTPSSLGPSLSSTSGIGTSPSQRSLQSLLGPS). Positions 427-456 (SSPSSLMSPSTPSSLGPSLSSTSGIGTSPS) are enriched in low complexity. Phosphoserine is present on residues Ser-459 and Ser-462. A Glycyl lysine isopeptide (Lys-Gly) (interchain with G-Cter in ubiquitin) cross-link involves residue Lys-469. WD repeat units lie at residues 539–581 (QNGT…NVLT), 589–629 (GHTE…ERLK), 632–671 (GHQD…LPLQ), and 725–765 (DVAP…PFFL). A disordered region spans residues 858–922 (GMTPVSQAPR…FEGVDEDEWD (65 aa)). The segment covering 881-893 (LEEKSDQQKKEEL) has biased composition (basic and acidic residues). Ser-912 carries the phosphoserine modification.

It belongs to the WD repeat coronin family. In terms of assembly, interacts with clathrin adapter AP1 complex. This interaction takes place at Golgi membranes and not AP1-positive endosomal membranes. Interacts (when ubiquitinated at Lys-469) with EPS15. In terms of processing, the membrane-associated form is phosphorylated on tyrosine residues. Post-translationally, ubiquitinated via 'Lys-33'-linked ubiquitin chains by the BCR(KLHL20) E3 ubiquitin ligase complex: 'Lys-33'-linked ubiquitination promotes interaction with EPS15 and facilitates actin polymerization at the trans-Golgi network, thereby facilitating post-Golgi trafficking. Deubiquitinated by ZRANB1/TRABID. In the adult, widely expressed with highest levels in brain, thymus and kidney and low levels in skeletal and heart muscle. Not expressed in lung. In the eye, strongly expressed in the outer plexiform layer of the retina. In the intestine, expressed both in terminally differentiated epithelial cells and in crypt epithelium. In the embryo, strongest expression is seen in brain, thymus, intestine, apical epidermal layers of the skin and developing lens fibers of the eye.

It localises to the golgi apparatus membrane. It is found in the golgi apparatus. Its subcellular location is the trans-Golgi network. The protein localises to the cytoplasmic vesicle. The protein resides in the cytoplasm. It localises to the cytosol. In terms of biological role, F-actin regulator involved in anterograde Golgi to endosome transport: upon ubiquitination via 'Lys-33'-linked ubiquitin chains by the BCR(KLHL20) E3 ubiquitin ligase complex, interacts with EPS15 and localizes to the trans-Golgi network, where it promotes actin polymerization, thereby facilitating post-Golgi trafficking. May play a role in the maintenance of the Golgi apparatus morphology. This is Coronin-7 (Coro7) from Mus musculus (Mouse).